A 465-amino-acid polypeptide reads, in one-letter code: Methionine aminopeptidase 2-2 (465 aa).

Residues 1 to 13 (MGSKTPNDHRRGP) show a composition bias toward basic and acidic residues. Positions 1 to 92 (MGSKTPNDHR…KKKTLLGGLQ (92 aa)) are disordered. The segment covering 44–55 (GETEDGEDEDDD) has biased composition (acidic residues). The span at 71–86 (TKKKNKRKKNKKKKKT) shows a compositional bias: basic residues. Residue His217 participates in substrate binding. Residues Asp238, Asp249, and His318 each contribute to the a divalent metal cation site. Residue His326 participates in substrate binding. Positions 351 and 446 each coordinate a divalent metal cation.

It belongs to the peptidase M24A family. Methionine aminopeptidase eukaryotic type 2 subfamily. Requires Co(2+) as cofactor. Zn(2+) is required as a cofactor. It depends on Mn(2+) as a cofactor. The cofactor is Fe(2+).

The protein resides in the cytoplasm. It carries out the reaction Release of N-terminal amino acids, preferentially methionine, from peptides and arylamides.. Cotranslationally removes the N-terminal methionine from nascent proteins. The N-terminal methionine is often cleaved when the second residue in the primary sequence is small and uncharged (Met-Ala-, Cys, Gly, Pro, Ser, Thr, or Val). The polypeptide is Methionine aminopeptidase 2-2 (Blastomyces gilchristii (strain SLH14081) (Blastomyces dermatitidis)).